Consider the following 232-residue polypeptide: Large ribosomal subunit protein uL1 (232 aa).

The protein belongs to the universal ribosomal protein uL1 family. In terms of assembly, part of the 50S ribosomal subunit.

Functionally, binds directly to 23S rRNA. The L1 stalk is quite mobile in the ribosome, and is involved in E site tRNA release. Protein L1 is also a translational repressor protein, it controls the translation of the L11 operon by binding to its mRNA. This Coxiella burnetii (strain CbuK_Q154) (Coxiella burnetii (strain Q154)) protein is Large ribosomal subunit protein uL1.